The primary structure comprises 930 residues: G patch domain-containing protein 1 (930 aa).

Residues 1-12 show a composition bias toward acidic residues; it reads MAALDSDSDEDL. Disordered regions lie at residues 1–41 and 170–209; these read MAAL…TVRD and GVGP…EDDD. Residue A2 is modified to N-acetylalanine. A phosphoserine mark is found at S6 and S8. The G-patch domain maps to 152-198; it reads KLSVGFELLRKMGWKEGQGVGPRVKRKARRQKPDPGVKIYGCALPPG. K313 participates in a covalent cross-link: Glycyl lysine isopeptide (Lys-Gly) (interchain with G-Cter in SUMO2). S358 is subject to Phosphoserine. Disordered regions lie at residues 400–420, 465–486, 566–596, and 654–930; these read GKAG…SKRG, SLAQ…GHSS, SSRF…DKQS, and PEPA…LRRQ. Low complexity predominate over residues 465–478; sequence SLAQSASSSRAQAS. Basic and acidic residues-rich tracts occupy residues 582–593 and 674–695; these read EVPRDQENDVSD and GSDK…KEDS. Position 715 is a phosphoserine (S715). The segment covering 719–737 has biased composition (basic and acidic residues); that stretch reads SKEEQAPEPRPDTTVDKAV. Positions 768–777 are enriched in acidic residues; it reads SEEEQDDSED. Basic residues predominate over residues 851-886; it reads KPKKSKERHKSKKEHRRKREKKKKHKKHKHKSKQKN. Residues 894–903 are compositionally biased toward low complexity; the sequence is SSESTDSSDS. Residues 921 to 930 are compositionally biased toward basic residues; sequence RLKCLPLRRQ.

This sequence belongs to the GPATCH1 family.

This is G patch domain-containing protein 1 (Gpatch1) from Mus musculus (Mouse).